Consider the following 256-residue polypeptide: Thiazole synthase (256 aa).

The Schiff-base intermediate with DXP role is filled by lysine 96. 1-deoxy-D-xylulose 5-phosphate contacts are provided by residues glycine 157, 184 to 185 (AG), and 206 to 207 (NT).

It belongs to the ThiG family. As to quaternary structure, homotetramer. Forms heterodimers with either ThiH or ThiS.

The protein resides in the cytoplasm. It catalyses the reaction [ThiS sulfur-carrier protein]-C-terminal-Gly-aminoethanethioate + 2-iminoacetate + 1-deoxy-D-xylulose 5-phosphate = [ThiS sulfur-carrier protein]-C-terminal Gly-Gly + 2-[(2R,5Z)-2-carboxy-4-methylthiazol-5(2H)-ylidene]ethyl phosphate + 2 H2O + H(+). It participates in cofactor biosynthesis; thiamine diphosphate biosynthesis. Its function is as follows. Catalyzes the rearrangement of 1-deoxy-D-xylulose 5-phosphate (DXP) to produce the thiazole phosphate moiety of thiamine. Sulfur is provided by the thiocarboxylate moiety of the carrier protein ThiS. In vitro, sulfur can be provided by H(2)S. This is Thiazole synthase from Brucella canis (strain ATCC 23365 / NCTC 10854 / RM-666).